Consider the following 370-residue polypeptide: Alpha-(1,3)-fucosyltransferase 7 (370 aa).

Topologically, residues 1 to 36 are cytoplasmic; the sequence is MVQGCLCWRGCCDLKTSFPWVTNSRRLWMNCIGCNP. A helical; Signal-anchor for type II membrane protein membrane pass occupies residues 37-59; sequence VWRLRAWGCLAGGTTLMVIWLFW. At 60–370 the chain is on the lumenal side; sequence LLRSVPGGAP…YEDLESWFQA (311 aa). Asn-86 carries N-linked (GlcNAc...) asparagine glycosylation. Cys-96 and Cys-104 are joined by a disulfide. The N-linked (GlcNAc...) asparagine glycan is linked to Asn-109. A disulfide bond links Cys-239 and Cys-242. Residue Asn-319 is glycosylated (N-linked (GlcNAc...) asparagine). Cys-346 and Cys-349 are joined by a disulfide.

Belongs to the glycosyltransferase 10 family. N-glycosylated. As to expression, expressed in lymph node and kidney.

The protein localises to the golgi apparatus. The protein resides in the golgi stack membrane. It carries out the reaction an N-acetyl-alpha-neuraminyl-(2-&gt;3)-beta-D-galactosyl-(1-&gt;4)-N-acetyl-beta-D-glucosaminyl derivative + GDP-beta-L-fucose = an alpha-Neu5Ac-(2-&gt;3)-beta-D-Gal-(1-&gt;4)-[alpha-L-Fuc-(1-&gt;3)]-beta-D-GlcNAc derivative + GDP + H(+). The catalysed reaction is a neolactoside IV(3)-alpha-NeuAc-nLc4Cer + GDP-beta-L-fucose = a neolactoside IV(3)-alpha-NeuNAc,III(3)-alpha-Fuc-nLc4Cer + GDP + H(+). The enzyme catalyses a neolactoside VI(3)-alpha-NeuNAc-nLc6Cer + GDP-beta-L-fucose = a neolactoside VI(3)-alpha-NeuAc,V(3)-alphaFuc-nLc6Cer + GDP + H(+). It catalyses the reaction an alpha-Neu5Ac-(2-&gt;3)-beta-D-Gal-(1-&gt;4)-beta-D-GlcNAc-(1-&gt;3)-beta-D-Gal-(1-&gt;4)-[alpha-L-Fuc-(1-&gt;3)]-beta-D-GlcNAc derivative + GDP-beta-L-fucose = an alpha-Neu5Ac-(2-&gt;3)-beta-D-Gal-(1-&gt;4)-[alpha-L-Fuc-(1-&gt;3)]-beta-D-GlcNAc-(1-&gt;3)-beta-D-Gal-(1-&gt;4)-[alpha-L-Fuc-(1-&gt;3)]-beta-D-GlcNAc derivative + GDP + H(+). It carries out the reaction an alpha-Neu5Ac-(2-&gt;3)-beta-D-Gal-(1-&gt;4)-beta-D-GlcNAc6S derivative + GDP-beta-L-fucose = an alpha-Neu5Ac-(2-&gt;3)-beta-D-Gal-(1-&gt;4)-[alpha-L-Fuc-(1-&gt;3)]-beta-D-GlcNAc6S derivative + GDP + H(+). The catalysed reaction is alpha-Neu5Ac-(2-&gt;3)-beta-D-Gal-(1-&gt;4)-beta-D-GlcNAc-(1-&gt;3)-beta-D-Gal-(1-&gt;4)-D-Glc + GDP-beta-L-fucose = alpha-Neu5Ac-(2-&gt;3)-beta-D-Gal-(1-&gt;4)-[alpha-L-Fuc-(1-&gt;3)]-beta-D-GlcNAc-(1-&gt;3)-beta-D-Gal-(1-&gt;4)-D-Glc + GDP + H(+). The enzyme catalyses alpha-Neu5Ac-(2-&gt;3)-beta-D-Gal-(1-&gt;4)-beta-D-GlcNAc-(1-&gt;3)-beta-D-Gal-(1-&gt;4)-[alpha-L-Fuc-(1-&gt;3)]-beta-D-GlcNAc-(1-&gt;3)-beta-D-Gal-(1-&gt;4)-beta-D-GlcNAc + GDP-beta-L-fucose = alpha-Neu5Ac-(2-&gt;3)-beta-D-Gal-(1-&gt;4)-[alpha-L-Fuc-(1-&gt;3)]-beta-D-GlcNAc-(1-&gt;3)-beta-D-Gal-(1-&gt;4)-[alpha-L-Fuc-(1-&gt;3)]-beta-D-GlcNAc-(1-&gt;3)-beta-D-Gal-(1-&gt;4)-beta-D-GlcNAc + GDP + H(+). It catalyses the reaction alpha-Neu5Ac-(2-&gt;3)-beta-D-Gal-(1-&gt;4)-beta-D-GlcNAc-(1-&gt;3)-beta-D-Gal-(1-&gt;4)-beta-D-GlcNAc-(1-&gt;3)-beta-D-Gal-(1-&gt;4)-beta-D-GlcNAc + GDP-beta-L-fucose = alpha-Neu5Ac-(2-&gt;3)-beta-D-Gal-(1-&gt;4)-[alpha-L-Fuc-(1-&gt;3)]-beta-D-GlcNAc-(1-&gt;3)-beta-D-Gal-(1-&gt;4)-beta-D-GlcNAc-(1-&gt;3)-beta-D-Gal-(1-&gt;4)-beta-D-GlcNAc + GDP + H(+). The protein operates within protein modification; protein glycosylation. With respect to regulation, inhibited by NaCl. Inhibited by GDP in a concentration dependent manner, with an IC(50) value of 93 uM. Also inhibited by GMP and GTP. Inhibited by N-ethylmaleimide. Activated by poly(ethylene glycol) by enhancing the thermal stability of FUT7. Activated by Mn2+, Ca2+, and Mg2+. Both panosialin A and B inhibit activity with IC(50) values of 4.8 and 5.3 ug/ml, respectively. Inhibited by gallic acid (GA) and (-)-epigallocatechin gallate (EGCG) in a time-dependent and irreversible manner with IC(50) values of 60 and 700 nM, respectively. Functionally, catalyzes the transfer of L-fucose, from a guanosine diphosphate-beta-L-fucose, to the N-acetyl glucosamine (GlcNAc) of a distal alpha2,3 sialylated lactosamine unit of a glycoprotein or a glycolipid-linked sialopolylactosamines chain through an alpha-1,3 glycosidic linkage and participates in the final fucosylation step in the biosynthesis of the sialyl Lewis X (sLe(x)), a carbohydrate involved in cell and matrix adhesion during leukocyte trafficking and fertilization. In vitro, also synthesizes sialyl-dimeric-Lex structures, from VIM-2 structures and both di-fucosylated and trifucosylated structures from mono-fucosylated precursors. However does not catalyze alpha 1-3 fucosylation when an internal alpha 1-3 fucosylation is present in polylactosamine chain and the fucosylation rate of the internal GlcNAc residues is reduced once fucose has been added to the distal GlcNAc. Also catalyzes the transfer of a fucose from GDP-beta-fucose to the 6-sulfated a(2,3)sialylated substrate to produce 6-sulfo sLex mediating significant L-selectin-dependent cell adhesion. Through sialyl-Lewis(x) biosynthesis, can control SELE- and SELP-mediated cell adhesion with leukocytes and allows leukocytes tethering and rolling along the endothelial tissue thereby enabling the leukocytes to accumulate at a site of inflammation. May enhance embryo implantation through sialyl Lewis X (sLeX)-mediated adhesion of embryo cells to endometrium. May affect insulin signaling by up-regulating the phosphorylation and expression of some signaling molecules involved in the insulin-signaling pathway through SLe(x) which is present on the glycans of the INSRR alpha subunit. The sequence is that of Alpha-(1,3)-fucosyltransferase 7 from Rattus norvegicus (Rat).